We begin with the raw amino-acid sequence, 453 residues long: Phosphoglucosamine mutase (453 aa).

Residue Ser105 is the Phosphoserine intermediate of the active site. 4 residues coordinate Mg(2+): Ser105, Asp244, Asp246, and Asp248. A Phosphoserine modification is found at Ser105.

It belongs to the phosphohexose mutase family. The cofactor is Mg(2+). Post-translationally, activated by phosphorylation.

The catalysed reaction is alpha-D-glucosamine 1-phosphate = D-glucosamine 6-phosphate. Functionally, catalyzes the conversion of glucosamine-6-phosphate to glucosamine-1-phosphate. This Chromohalobacter salexigens (strain ATCC BAA-138 / DSM 3043 / CIP 106854 / NCIMB 13768 / 1H11) protein is Phosphoglucosamine mutase.